The following is a 745-amino-acid chain: MMTQANAYFYNGADVALLNGQYTDVFSLLGMHTSEDGKSLIVRCFLRNALKVDVISIKDGRRVAGLEKVNDAGLFAGTMGRRVKPFLYLLRIQYPLSQIEIVDPYQFGPLLNADDLYLFGEGSAERAYEFLGANWRDVEGIEGVHFCVWAPNAKRVSVVGDFNHWDDTRHVMRQHMANGLWEIFLPNVAEGAHYKFDLVHPNGERHAKSDPMATQMECAPHNASIVPKKSKHSWKDTLWMNKRAVTAWHKAPMAIYEVHLGSWRRKGDNGEQYLDYQDLIEQLIPYVKAQSFTHIELMPISEYPFDGSWGYQPVGLYAPTHRFGDANGLKAFVDACHQADIGVVLDWVAAHFPKDPHGLVRFDGTCLYEHEDPRKGTHPDWDTLIYNYGRGEVRSFLLSNACYWLREFHFDGLRIDAVSSMLYLDYSREPGQWLPNAYGGRENLEAISFLQMLNQRLYQAFPGICMIAEESTAFAGVTKPTDHHGLGFGFKWNMGWMNDSLSYLSRDPIYRQYHHHQLTFSLMYAYTEQFMLSVSHDEVVHGKGSLLHKIPGDDWQKFATLRAYYGFMWGHPGKKLLFMGSEFAQRDEWDHNHSLDWHLLAFEPHQGVQRWLKDLNQLYQGMSALSVLDYQPAGFRWLDCDNGSASIFTFVRYGLAGDAPLVFVINMTPSVHHGFRIGLPQAGDFCEYLNSDSYLYGGSNQGNAGLVVAQNQSWQGMESSALITVPPLSCLVLGPVANQVEAKRR.

The active-site Nucleophile is the aspartate 416. Glutamate 469 functions as the Proton donor in the catalytic mechanism.

It belongs to the glycosyl hydrolase 13 family. GlgB subfamily. In terms of assembly, monomer.

The catalysed reaction is Transfers a segment of a (1-&gt;4)-alpha-D-glucan chain to a primary hydroxy group in a similar glucan chain.. It participates in glycan biosynthesis; glycogen biosynthesis. Catalyzes the formation of the alpha-1,6-glucosidic linkages in glycogen by scission of a 1,4-alpha-linked oligosaccharide from growing alpha-1,4-glucan chains and the subsequent attachment of the oligosaccharide to the alpha-1,6 position. This Shewanella sp. (strain W3-18-1) protein is 1,4-alpha-glucan branching enzyme GlgB.